A 585-amino-acid polypeptide reads, in one-letter code: Protein NRT1/ PTR FAMILY 4.6 (585 aa).

The next 12 helical transmembrane spans lie at 28–48 (GMLA…AYLA), 75–95 (FMGT…AFFS), 96–116 (TFQI…ILTI), 142–162 (AMLF…KGSL), 184–204 (FFNY…TFVV), 211–231 (GWEW…LIFL), 343–363 (IVLK…CLAQ), 391–411 (IFPV…IIPF), 428–448 (IGVG…VEIK), 465–485 (LPVT…ADLF), 508–528 (SLSW…VSIV), and 554–574 (FYWL…FWAM).

It belongs to the major facilitator superfamily. Proton-dependent oligopeptide transporter (POT/PTR) (TC 2.A.17) family. In terms of tissue distribution, expressed in root hairs and in epidermis of both root tips and mature regions of roots. Detected in shoots, stems, flowers, siliques and imbibed seeds. Expressed in vascular tissues in cotyledons, trus leaves, hypocotyls, roots and inflorescence stems.

Its subcellular location is the cell membrane. In terms of biological role, low-affinity proton-dependent nitrate transporter. Involved in constitutive nitrate uptake. Not involved in histidine or dipeptides transport. Involved in (+)-abscisic acid (ABA) transport, but not in gibberellin, indole-3-acetic acid or jasmonic acid import. Mediates cellular ABA uptake. Nitrate does not compete with abscisic acid as a substrate of NPF4.6. This chain is Protein NRT1/ PTR FAMILY 4.6 (NPF4.6), found in Arabidopsis thaliana (Mouse-ear cress).